The primary structure comprises 224 residues: MASLTSIATPYPSSSQALRLKSSGNTLFSAGVRSAAMVSGHKTLKIQCTSTKPAKPAAEVDWRQKRELLLEKRVRSVDVKEAQRLQKENNFVILDVRPEAEYKAGHPPGAINVEMYRLIREWTAWDIARRLGFAFFGIFSGTEENPEFIQSVEAKLDKEAKIIVACSSAGTMKPTQNLPEGQQSRSLIAAYLLVLNGYKNVFHLEGGIYTWGKEGLPVETIEED.

The transit peptide at 1-48 (MASLTSIATPYPSSSQALRLKSSGNTLFSAGVRSAAMVSGHKTLKIQC) directs the protein to the chloroplast. The 134-residue stretch at 87-220 (KENNFVILDV…WGKEGLPVET (134 aa)) folds into the Rhodanese domain. Cys166 acts as the Cysteine persulfide intermediate in catalysis.

The protein resides in the plastid. Its subcellular location is the chloroplast. The polypeptide is Rhodanese-like domain-containing protein 14, chloroplastic (Arabidopsis thaliana (Mouse-ear cress)).